A 155-amino-acid chain; its full sequence is Peptidyl-prolyl cis-trans isomerase ppi1 (155 aa).

In terms of domain architecture, PPIase cyclophilin-type spans 1-154 (MANVELQTSL…EPLKIIKAVA (154 aa)).

Belongs to the cyclophilin-type PPIase family. PPIL1 subfamily. In terms of assembly, interacts with cwf13/snw1.

The catalysed reaction is [protein]-peptidylproline (omega=180) = [protein]-peptidylproline (omega=0). PPIases accelerate the folding of proteins. It catalyzes the cis-trans isomerization of proline imidic peptide bonds in oligopeptides. The sequence is that of Peptidyl-prolyl cis-trans isomerase ppi1 (ppi1) from Schizosaccharomyces pombe (strain 972 / ATCC 24843) (Fission yeast).